Consider the following 866-residue polypeptide: Sphingomyelin phosphodiesterase 4 (866 aa).

Residues Ser-169 and Ser-285 each carry the phosphoserine modification. At Thr-708 the chain carries Phosphothreonine. Phosphoserine is present on Ser-792. A helical transmembrane segment spans residues 822–842; that stretch reads LLLAFFVASLFCVGPLPCTLL.

Requires Mg(2+) as cofactor. In terms of tissue distribution, widely expressed, with highest levels in heart and skeletal muscle. Expressed in skeletal muscle (at protein level). As to expression, expressed in skeletal muscle but a lower levels than isoform 1 (at protein level).

The protein resides in the endoplasmic reticulum membrane. It localises to the golgi apparatus membrane. Its subcellular location is the nucleus envelope. The protein localises to the cell membrane. It is found in the sarcolemma. The catalysed reaction is a sphingomyelin + H2O = phosphocholine + an N-acylsphing-4-enine + H(+). Its activity is regulated as follows. Activated by phosphatidylserine and tumor necrosis factor (TNF). Inhibited by scyphostatin. In terms of biological role, catalyzes the hydrolysis of membrane sphingomyelin to form phosphorylcholine and ceramide. It has a relevant role in the homeostasis of membrane sphingolipids, thereby influencing membrane integrity, and endoplasmic reticulum organization and function. May sensitize cells to DNA damage-induced apoptosis. In skeletal muscle, mediates TNF-stimulated oxidant production. The polypeptide is Sphingomyelin phosphodiesterase 4 (Homo sapiens (Human)).